We begin with the raw amino-acid sequence, 21 residues long: Outer membrane protein A (21 aa).

Residues 6-16 (TWYTGAKLGWS) form a beta stranded membrane-spanning segment.

The protein belongs to the outer membrane OOP (TC 1.B.6) superfamily. OmpA family. As to quaternary structure, monomer and homodimer.

Its subcellular location is the cell outer membrane. Functionally, with TolR probably plays a role in maintaining the position of the peptidoglycan cell wall in the periplasm. Acts as a porin with low permeability that allows slow penetration of small solutes; an internal gate slows down solute passage. This chain is Outer membrane protein A, found in Actinobacillus lignieresii.